A 110-amino-acid polypeptide reads, in one-letter code: Putative UPF0377 protein YKL223W (110 aa).

It belongs to the UPF0377 family.

This is Putative UPF0377 protein YKL223W from Saccharomyces cerevisiae (strain ATCC 204508 / S288c) (Baker's yeast).